A 153-amino-acid chain; its full sequence is UPF0178 protein MXAN_5526 (153 aa).

The protein belongs to the UPF0178 family.

This Myxococcus xanthus (strain DK1622) protein is UPF0178 protein MXAN_5526.